The primary structure comprises 278 residues: MKTKTDFLKMKEQGEPITMLTAYDYPSAKLAEEAEVDMILVGDSLGMVVLGYDSTVPVTVEDMIHHTKAVRRGAKETFIVTDMPFMSYHVSLQETMMNARRIVQESGAHALKVEGAGEVISTIQYLTNAGIPVVAHLGLTPQSVGVLGGYKVQGKDAESAKKLIEDAKKCEEAGAIALVLECVPMQLAELISEQLTIPTIGIGAGQKVDGQVLVYHDLISYGVNRVPKFVKQYTSVQEEIVRGISQYVTEVKTRQFPEEKHSFTMKEEDRLALYGGKQ.

Residues aspartate 43 and aspartate 82 each contribute to the Mg(2+) site. 3-methyl-2-oxobutanoate-binding positions include 43 to 44 (DS), aspartate 82, and lysine 112. Glutamate 114 lines the Mg(2+) pocket. Catalysis depends on glutamate 181, which acts as the Proton acceptor.

Belongs to the PanB family. In terms of assembly, homodecamer; pentamer of dimers. Requires Mg(2+) as cofactor.

It is found in the cytoplasm. The enzyme catalyses 3-methyl-2-oxobutanoate + (6R)-5,10-methylene-5,6,7,8-tetrahydrofolate + H2O = 2-dehydropantoate + (6S)-5,6,7,8-tetrahydrofolate. It participates in cofactor biosynthesis; (R)-pantothenate biosynthesis; (R)-pantoate from 3-methyl-2-oxobutanoate: step 1/2. Its function is as follows. Catalyzes the reversible reaction in which hydroxymethyl group from 5,10-methylenetetrahydrofolate is transferred onto alpha-ketoisovalerate to form ketopantoate. This chain is 3-methyl-2-oxobutanoate hydroxymethyltransferase, found in Bacillus cereus (strain G9842).